Consider the following 461-residue polypeptide: Mannan endo-1,4-beta-mannosidase 4 (461 aa).

Substrate is bound by residues Trp80 and Asn195. Glu196 serves as the catalytic Proton donor. Tyr274 is a binding site for substrate. The active-site Nucleophile is the Glu314. Substrate-binding residues include Trp357 and Asp364.

This sequence belongs to the glycosyl hydrolase 5 (cellulase A) family. In terms of tissue distribution, ubiquitous.

It catalyses the reaction Random hydrolysis of (1-&gt;4)-beta-D-mannosidic linkages in mannans, galactomannans and glucomannans.. The sequence is that of Mannan endo-1,4-beta-mannosidase 4 (MAN4) from Oryza sativa subsp. japonica (Rice).